A 296-amino-acid chain; its full sequence is 4-hydroxy-tetrahydrodipicolinate synthase (296 aa).

A pyruvate-binding site is contributed by Thr-49. Catalysis depends on Tyr-137, which acts as the Proton donor/acceptor. Lys-166 serves as the catalytic Schiff-base intermediate with substrate. Ile-208 is a pyruvate binding site.

Belongs to the DapA family. As to quaternary structure, homotetramer; dimer of dimers.

The protein localises to the cytoplasm. The enzyme catalyses L-aspartate 4-semialdehyde + pyruvate = (2S,4S)-4-hydroxy-2,3,4,5-tetrahydrodipicolinate + H2O + H(+). It participates in amino-acid biosynthesis; L-lysine biosynthesis via DAP pathway; (S)-tetrahydrodipicolinate from L-aspartate: step 3/4. In terms of biological role, catalyzes the condensation of (S)-aspartate-beta-semialdehyde [(S)-ASA] and pyruvate to 4-hydroxy-tetrahydrodipicolinate (HTPA). The chain is 4-hydroxy-tetrahydrodipicolinate synthase from Azobacteroides pseudotrichonymphae genomovar. CFP2.